A 284-amino-acid chain; its full sequence is Pantothenate synthetase (284 aa).

Residue 30–37 (MGNLHDGH) participates in ATP binding. His37 serves as the catalytic Proton donor. Residue Gln61 participates in (R)-pantoate binding. Gln61 provides a ligand contact to beta-alanine. ATP is bound at residue 149 to 152 (GEKD). Gln155 is a (R)-pantoate binding site. ATP contacts are provided by residues Ile178 and 186-189 (LSSR).

The protein belongs to the pantothenate synthetase family. As to quaternary structure, homodimer.

It localises to the cytoplasm. It carries out the reaction (R)-pantoate + beta-alanine + ATP = (R)-pantothenate + AMP + diphosphate + H(+). It functions in the pathway cofactor biosynthesis; (R)-pantothenate biosynthesis; (R)-pantothenate from (R)-pantoate and beta-alanine: step 1/1. Catalyzes the condensation of pantoate with beta-alanine in an ATP-dependent reaction via a pantoyl-adenylate intermediate. This is Pantothenate synthetase from Salmonella paratyphi A (strain ATCC 9150 / SARB42).